The following is a 323-amino-acid chain: Lipoyl synthase (323 aa).

[4Fe-4S] cluster is bound by residues Cys65, Cys70, Cys76, Cys91, Cys95, Cys98, and Ser304. Residues 77 to 293 (FNNGTATFMI…KKEALSIGFT (217 aa)) enclose the Radical SAM core domain.

The protein belongs to the radical SAM superfamily. Lipoyl synthase family. Requires [4Fe-4S] cluster as cofactor.

It localises to the cytoplasm. The catalysed reaction is [[Fe-S] cluster scaffold protein carrying a second [4Fe-4S](2+) cluster] + N(6)-octanoyl-L-lysyl-[protein] + 2 oxidized [2Fe-2S]-[ferredoxin] + 2 S-adenosyl-L-methionine + 4 H(+) = [[Fe-S] cluster scaffold protein] + N(6)-[(R)-dihydrolipoyl]-L-lysyl-[protein] + 4 Fe(3+) + 2 hydrogen sulfide + 2 5'-deoxyadenosine + 2 L-methionine + 2 reduced [2Fe-2S]-[ferredoxin]. Its pathway is protein modification; protein lipoylation via endogenous pathway; protein N(6)-(lipoyl)lysine from octanoyl-[acyl-carrier-protein]: step 2/2. Functionally, catalyzes the radical-mediated insertion of two sulfur atoms into the C-6 and C-8 positions of the octanoyl moiety bound to the lipoyl domains of lipoate-dependent enzymes, thereby converting the octanoylated domains into lipoylated derivatives. The chain is Lipoyl synthase from Buchnera aphidicola subsp. Acyrthosiphon pisum (strain 5A).